The following is a 235-amino-acid chain: Glucosamine-6-phosphate deaminase (235 aa).

Aspartate 62 functions as the Proton acceptor; for enolization step in the catalytic mechanism. The active-site For ring-opening step is the asparagine 128. The active-site Proton acceptor; for ring-opening step is histidine 130. Glutamate 135 serves as the catalytic For ring-opening step.

The protein belongs to the glucosamine/galactosamine-6-phosphate isomerase family. NagB subfamily.

It carries out the reaction alpha-D-glucosamine 6-phosphate + H2O = beta-D-fructose 6-phosphate + NH4(+). It participates in amino-sugar metabolism; N-acetylneuraminate degradation; D-fructose 6-phosphate from N-acetylneuraminate: step 5/5. Its function is as follows. Catalyzes the reversible isomerization-deamination of glucosamine 6-phosphate (GlcN6P) to form fructose 6-phosphate (Fru6P) and ammonium ion. This chain is Glucosamine-6-phosphate deaminase, found in Streptococcus sanguinis (strain SK36).